A 125-amino-acid polypeptide reads, in one-letter code: UPF0225 protein Cgl1438/cg1626 (125 aa).

The protein belongs to the UPF0225 family.

The chain is UPF0225 protein Cgl1438/cg1626 from Corynebacterium glutamicum (strain ATCC 13032 / DSM 20300 / JCM 1318 / BCRC 11384 / CCUG 27702 / LMG 3730 / NBRC 12168 / NCIMB 10025 / NRRL B-2784 / 534).